The chain runs to 406 residues: MAKKEVKKIVLAYSGGLDTSIILKWLKNEYGCEVVTFSADLGQGDELEPVREKAFKTGADKVYIDDLREEFVRDFVYPMFRANAIYEGSYLLGTSIARPLIAKRQMEIAKIEGCDAVSHGATGKGNDQVRFELAYYHFNPGITVVAPWREWKLNSRQALINYAKRNDIPIPITKKRPWSSDRNLLHISFEGGILEDTWLEPPENMFVLTKAPEKAPNKPQYIEIEFEKGNAVAVDGVRMSPAELLAHLNTIGGEHGIGRVDLLENRSVGMKSRGVYETPGGTILREAHMAVEQITMDREVMHLRDSLIPRYAEMIYNGYWFSPEREMMQCMIDESQKTVNGVARLKLYKGHCRTVGRKSESDSLFNLDFATFEKDQVYNQADAEGFIKLNSLRLRIRSLMLANKNK.

ATP-binding positions include Ala12–Ser20 and Ala39. Tyr90 and Ser95 together coordinate L-citrulline. Position 120 (Gly120) interacts with ATP. L-aspartate-binding residues include Thr122, Asn126, and Asp127. Asn126 contributes to the L-citrulline binding site. L-citrulline is bound by residues Arg130, Ser179, Ser188, Glu264, and Tyr276.

This sequence belongs to the argininosuccinate synthase family. Type 1 subfamily. Homotetramer.

It is found in the cytoplasm. It carries out the reaction L-citrulline + L-aspartate + ATP = 2-(N(omega)-L-arginino)succinate + AMP + diphosphate + H(+). Its pathway is amino-acid biosynthesis; L-arginine biosynthesis; L-arginine from L-ornithine and carbamoyl phosphate: step 2/3. This is Argininosuccinate synthase from Citrifermentans bemidjiense (strain ATCC BAA-1014 / DSM 16622 / JCM 12645 / Bem) (Geobacter bemidjiensis).